We begin with the raw amino-acid sequence, 343 residues long: General stress protein 30 (343 aa).

Belongs to the polysaccharide pyruvyl transferase family.

The polypeptide is General stress protein 30 (yxaB) (Bacillus subtilis (strain 168)).